The primary structure comprises 109 residues: Parvalbumin beta (109 aa).

Ala2 bears the N-acetylalanine mark. EF-hand domains are found at residues 39–74 (KSADEVKKAFAIIDQDKSGYIEEEELKLFLQNFKAG) and 78–109 (LSDAETKAFLKAGDSDGDGKIGVDEFAAMIKG). Ca(2+)-binding residues include Asp52, Asp54, Ser56, Tyr58, Glu60, Glu63, Asp91, Asp93, Asp95, Lys97, and Glu102.

It belongs to the parvalbumin family. The N-terminus is blocked.

Functionally, in muscle, parvalbumin is thought to be involved in relaxation after contraction. It binds two calcium ions. The protein is Parvalbumin beta of Scomber scombrus (Atlantic mackerel).